A 189-amino-acid polypeptide reads, in one-letter code: Protein GrpE (189 aa).

Residues 1–13 (MSENKQPEQNQDL) show a composition bias toward polar residues. Residues 1–35 (MSENKQPEQNQDLTGEPSPEELEAAQAADEFDAMN) form a disordered region.

The protein belongs to the GrpE family. Homodimer.

It localises to the cytoplasm. Functionally, participates actively in the response to hyperosmotic and heat shock by preventing the aggregation of stress-denatured proteins, in association with DnaK and GrpE. It is the nucleotide exchange factor for DnaK and may function as a thermosensor. Unfolded proteins bind initially to DnaJ; upon interaction with the DnaJ-bound protein, DnaK hydrolyzes its bound ATP, resulting in the formation of a stable complex. GrpE releases ADP from DnaK; ATP binding to DnaK triggers the release of the substrate protein, thus completing the reaction cycle. Several rounds of ATP-dependent interactions between DnaJ, DnaK and GrpE are required for fully efficient folding. The chain is Protein GrpE from Polaromonas naphthalenivorans (strain CJ2).